Here is a 351-residue protein sequence, read N- to C-terminus: Small ribosomal subunit protein uS2 (351 aa).

The disordered stretch occupies residues 302-351; the sequence is QNNYDPSKRGYNPKYVNHKSTFNKFNNKKPAEATSQAKTNEKIVIKAETN. Residues 340–351 show a composition bias toward basic and acidic residues; it reads TNEKIVIKAETN.

The protein belongs to the universal ribosomal protein uS2 family.

This is Small ribosomal subunit protein uS2 from Ureaplasma urealyticum serovar 10 (strain ATCC 33699 / Western).